A 429-amino-acid chain; its full sequence is Glycine betaine monooxygenase oxygenase subunit (429 aa).

One can recognise a Rieske domain in the interval 56 to 163 (WLIAGMTCEI…VKTAGGYIFI (108 aa)). [2Fe-2S] cluster contacts are provided by Cys98, His100, Cys118, and His121. Fe cation-binding residues include His217 and His222.

The protein belongs to the bacterial ring-hydroxylating dioxygenase alpha subunit family. The system is composed of an oxygenase subunit (GbcA) and a reductase subunit (GbcB). Requires [2Fe-2S] cluster as cofactor. Fe cation is required as a cofactor.

It carries out the reaction glycine betaine + NADH + O2 + H(+) = N,N-dimethylglycine + formaldehyde + NAD(+) + H2O. Its function is as follows. Involved in degradation of glycine betaine. Part of a Rieske-type oxygenase system that catalyzes the conversion of glycine betaine (GB) to dimethylglycine (DMG). This subunit is the terminal oxygenase component of the system. Required for growth on choline and GB, but not for growth on DMG. This chain is Glycine betaine monooxygenase oxygenase subunit, found in Pseudomonas aeruginosa (strain ATCC 15692 / DSM 22644 / CIP 104116 / JCM 14847 / LMG 12228 / 1C / PRS 101 / PAO1).